A 134-amino-acid polypeptide reads, in one-letter code: Ribosome-binding factor A (134 aa).

Belongs to the RbfA family. As to quaternary structure, monomer. Binds 30S ribosomal subunits, but not 50S ribosomal subunits or 70S ribosomes.

It is found in the cytoplasm. Functionally, one of several proteins that assist in the late maturation steps of the functional core of the 30S ribosomal subunit. Associates with free 30S ribosomal subunits (but not with 30S subunits that are part of 70S ribosomes or polysomes). Required for efficient processing of 16S rRNA. May interact with the 5'-terminal helix region of 16S rRNA. The sequence is that of Ribosome-binding factor A from Psychrobacter cryohalolentis (strain ATCC BAA-1226 / DSM 17306 / VKM B-2378 / K5).